We begin with the raw amino-acid sequence, 342 residues long: Succinylglutamate desuccinylase (342 aa).

His63, Glu66, and His155 together coordinate Zn(2+). Residue Glu219 is part of the active site.

This sequence belongs to the AspA/AstE family. Succinylglutamate desuccinylase subfamily. The cofactor is Zn(2+).

It catalyses the reaction N-succinyl-L-glutamate + H2O = L-glutamate + succinate. It functions in the pathway amino-acid degradation; L-arginine degradation via AST pathway; L-glutamate and succinate from L-arginine: step 5/5. In terms of biological role, transforms N(2)-succinylglutamate into succinate and glutamate. The sequence is that of Succinylglutamate desuccinylase from Vibrio cholerae serotype O1 (strain ATCC 39315 / El Tor Inaba N16961).